The primary structure comprises 466 residues: MDNNRVAPEIPGLRQPGQITNDIRMLMCKLLNSAKPANTFPGSQPVSFHLADIEEKLLAQDYYVCEKTDGLRALMLIMVNPVTKEQGCFMIDRENNYYMVNGFRFPCLPRANKKELLETLQDGTLIDGELVMQTNPVTKLKELRYLMFDCLAVNGRSLVQSPTSSRLAHLGKEFFKPYYDLRSYFPDRCSTFPFKISMKHMNFSYDLAKVAKTLDSLPHVSDGLIFTPVQAAYHIGGKDSYLLKWKPEVENTVDFKLIIEPPVVEDKSLPKSDKNRFYYNYDVKPLFHLYVWQGGNDVNNRIQDFEQPFTKSDLELLERTYRKFAEIEIDDKQWNELKAMEEPLNGRIVECSKDQESGAWKLLRFRDDKLNGNHVSVVQKVLESIGDSVSLDDLEQVVDEMRSRWKEREQGLKNAQKQFNHQASARSSLSQQHSTEPEQSQDQPKYVDDDDDNWSDDEPDTKRQKI.

Lysine 67 functions as the N6-GMP-lysine intermediate in the catalytic mechanism. A disordered region spans residues 408 to 466; that stretch reads REQGLKNAQKQFNHQASARSSLSQQHSTEPEQSQDQPKYVDDDDDNWSDDEPDTKRQKI. The segment covering 413 to 443 has biased composition (polar residues); sequence KNAQKQFNHQASARSSLSQQHSTEPEQSQDQ. Residues 448–459 are compositionally biased toward acidic residues; sequence DDDDDNWSDDEP.

It belongs to the eukaryotic GTase family. As to quaternary structure, heterodimer. The mRNA-capping enzyme is composed of two separate chains alpha and beta, respectively a mRNA guanylyltransferase and an mRNA 5'-triphosphate monophosphatase.

Its subcellular location is the nucleus. The enzyme catalyses a 5'-end diphospho-ribonucleoside in mRNA + GTP + H(+) = a 5'-end (5'-triphosphoguanosine)-ribonucleoside in mRNA + diphosphate. In terms of biological role, second step of mRNA capping. Transfer of the GMP moiety of GTP to the 5'-end of RNA via an enzyme-GMP covalent reaction intermediate. The protein is mRNA-capping enzyme subunit alpha (CEG1) of Kluyveromyces lactis (strain ATCC 8585 / CBS 2359 / DSM 70799 / NBRC 1267 / NRRL Y-1140 / WM37) (Yeast).